The following is a 208-amino-acid chain: MAKEIPDLVAEARAGTGKGAARQARREGKVPGIVYGDGKEPQPIQIEFNSLLTKLRAGRFMSTLWNLKVEGQDDVRVVCRGVQRDVVKDLPTHIDFMRLHRNTRVNLFIHVNFENQDEAPGLKRGGTLVVVRPEVELVVTASDIPEQITVDLTGKQIGDTIHINDVVLPKGVKPTIDRNFVIANIAAPSGLRSADNEEAAAESEATEA.

The protein belongs to the bacterial ribosomal protein bL25 family. CTC subfamily. As to quaternary structure, part of the 50S ribosomal subunit; part of the 5S rRNA/L5/L18/L25 subcomplex. Contacts the 5S rRNA. Binds to the 5S rRNA independently of L5 and L18.

Its function is as follows. This is one of the proteins that binds to the 5S RNA in the ribosome where it forms part of the central protuberance. This chain is Large ribosomal subunit protein bL25, found in Paracoccus denitrificans (strain Pd 1222).